The sequence spans 139 residues: Prostate-associated microseminoprotein (139 aa).

An N-terminal signal peptide occupies residues 1–35 (MALRMLWAGQAKGILGGWRTICLVVSLFLQHPGVS). Cystine bridges form between Cys-38/Cys-78, Cys-46/Cys-69, Cys-64/Cys-100, Cys-67/Cys-77, and Cys-91/Cys-114. The segment at 116-139 (GGGPDLEWGSANTPAPGASAPHSS) is disordered.

It belongs to the beta-microseminoprotein family.

It localises to the secreted. Functionally, acts as a ligand for C-C chemokine receptor CCR2. Signals through binding and activation of CCR2 and induces a strong chemotactic response and mobilization of intracellular calcium ions. Exhibits a chemotactic activity for monocytes and lymphocytes but not neutrophils. The protein is Prostate-associated microseminoprotein (Msmp) of Mus musculus (Mouse).